The sequence spans 255 residues: Proteasome subunit alpha (255 aa).

The protein belongs to the peptidase T1A family. As to quaternary structure, the 20S proteasome core is composed of 14 alpha and 14 beta subunits that assemble into four stacked heptameric rings, resulting in a barrel-shaped structure. The two inner rings, each composed of seven catalytic beta subunits, are sandwiched by two outer rings, each composed of seven alpha subunits. The catalytic chamber with the active sites is on the inside of the barrel. Has a gated structure, the ends of the cylinder being occluded by the N-termini of the alpha-subunits. Is capped at one or both ends by the proteasome regulatory ATPase, PAN.

It is found in the cytoplasm. Its activity is regulated as follows. The formation of the proteasomal ATPase PAN-20S proteasome complex, via the docking of the C-termini of PAN into the intersubunit pockets in the alpha-rings, triggers opening of the gate for substrate entry. Interconversion between the open-gate and close-gate conformations leads to a dynamic regulation of the 20S proteasome proteolysis activity. Functionally, component of the proteasome core, a large protease complex with broad specificity involved in protein degradation. The sequence is that of Proteasome subunit alpha from Natronomonas pharaonis (strain ATCC 35678 / DSM 2160 / CIP 103997 / JCM 8858 / NBRC 14720 / NCIMB 2260 / Gabara) (Halobacterium pharaonis).